The primary structure comprises 329 residues: GTP 3',8-cyclase (329 aa).

The Radical SAM core domain occupies A8 to A234. A GTP-binding site is contributed by R17. Residues C24 and C28 each contribute to the [4Fe-4S] cluster site. Position 30 (Y30) interacts with S-adenosyl-L-methionine. C31 provides a ligand contact to [4Fe-4S] cluster. R68 contacts GTP. Residue G72 participates in S-adenosyl-L-methionine binding. T99 provides a ligand contact to GTP. S123 provides a ligand contact to S-adenosyl-L-methionine. K160 is a binding site for GTP. Position 194 (M194) interacts with S-adenosyl-L-methionine. Residues C257 and C260 each coordinate [4Fe-4S] cluster. R262–R264 contacts GTP. C274 is a binding site for [4Fe-4S] cluster.

This sequence belongs to the radical SAM superfamily. MoaA family. Monomer and homodimer. Requires [4Fe-4S] cluster as cofactor.

It carries out the reaction GTP + AH2 + S-adenosyl-L-methionine = (8S)-3',8-cyclo-7,8-dihydroguanosine 5'-triphosphate + 5'-deoxyadenosine + L-methionine + A + H(+). Its pathway is cofactor biosynthesis; molybdopterin biosynthesis. Catalyzes the cyclization of GTP to (8S)-3',8-cyclo-7,8-dihydroguanosine 5'-triphosphate. The polypeptide is GTP 3',8-cyclase (Escherichia coli (strain K12 / MC4100 / BW2952)).